Reading from the N-terminus, the 368-residue chain is Caffeine synthase 3 (368 aa).

Residue tyrosine 23 coordinates S-adenosyl-L-homocysteine. Threonine 30 contacts caffeine. Positions 65, 70, 102, 103, 137, and 138 each coordinate S-adenosyl-L-homocysteine. Residues tyrosine 155, histidine 158, and tryptophan 159 each coordinate caffeine. Asparagine 176 is a Mg(2+) binding site. Arginine 224 contacts caffeine. The Mg(2+) site is built by aspartate 262, phenylalanine 264, and asparagine 265. Phenylalanine 320 lines the caffeine pocket.

It belongs to the methyltransferase superfamily. Type-7 methyltransferase family. It depends on Mg(2+) as a cofactor.

It catalyses the reaction theobromine + S-adenosyl-L-methionine = caffeine + S-adenosyl-L-homocysteine + H(+). The catalysed reaction is 7-methylxanthine + S-adenosyl-L-methionine = theobromine + S-adenosyl-L-homocysteine + H(+). Its pathway is alkaloid biosynthesis. Involved in the biosynthesis of caffeine. Catalyzes the conversion of 7-methylxanthine (7mX) to theobromine and of theobromine to caffeine. The chain is Caffeine synthase 3 from Camellia sinensis (Tea plant).